The following is a 264-amino-acid chain: 3-methyl-2-oxobutanoate hydroxymethyltransferase (264 aa).

Residues D45 and D84 each contribute to the Mg(2+) site. Residues 45–46, D84, and K112 each bind 3-methyl-2-oxobutanoate; that span reads DS. E114 serves as a coordination point for Mg(2+). The active-site Proton acceptor is the E181.

The protein belongs to the PanB family. Homodecamer; pentamer of dimers. Mg(2+) serves as cofactor.

It is found in the cytoplasm. The enzyme catalyses 3-methyl-2-oxobutanoate + (6R)-5,10-methylene-5,6,7,8-tetrahydrofolate + H2O = 2-dehydropantoate + (6S)-5,6,7,8-tetrahydrofolate. It functions in the pathway cofactor biosynthesis; (R)-pantothenate biosynthesis; (R)-pantoate from 3-methyl-2-oxobutanoate: step 1/2. Its function is as follows. Catalyzes the reversible reaction in which hydroxymethyl group from 5,10-methylenetetrahydrofolate is transferred onto alpha-ketoisovalerate to form ketopantoate. The polypeptide is 3-methyl-2-oxobutanoate hydroxymethyltransferase (Shewanella sp. (strain ANA-3)).